The sequence spans 86 residues: MQQERDHKRDCCKLMPQTVKAFFKCLRFRRSSSSSSDMVKARARNEEKEEPSSIETSTRSLNVMRKGIRKQPVSSGKRGGVNDYDM.

A propeptide spanning residues 1–59 (MQQERDHKRDCCKLMPQTVKAFFKCLRFRRSSSSSSDMVKARARNEEKEEPSSIETSTR) is cleaved from the precursor. A disordered region spans residues 31–86 (SSSSSSDMVKARARNEEKEEPSSIETSTRSLNVMRKGIRKQPVSSGKRGGVNDYDM). Over residues 39 to 51 (VKARARNEEKEEP) the composition is skewed to basic and acidic residues.

Belongs to the brassicaceae elicitor peptide family.

In terms of biological role, elicitor of plant defense. The sequence is that of Elicitor peptide 5 (PEP5) from Arabidopsis thaliana (Mouse-ear cress).